The primary structure comprises 35 residues: MGLRPDGIIGHSLGEVARAYYNGRISQEEAILSAY.

S12 is an active-site residue.

Homodimer which is arranged in a head to tail fashion. Interacts with CEACAM1; this interaction is insulin and phosphorylation-dependent; reduces fatty-acid synthase activity.

The protein resides in the cytoplasm. It is found in the melanosome. It carries out the reaction acetyl-CoA + n malonyl-CoA + 2n NADPH + 2n H(+) = a long-chain fatty acid + (n+1) CoA + n CO2 + 2n NADP(+).. Fatty acid synthetase catalyzes the formation of long-chain fatty acids from acetyl-CoA, malonyl-CoA and NADPH. This multifunctional protein has 7 catalytic activities as an acyl carrier protein. In terms of biological role, this fragment is from the acyltransferase domain of the fatty acid synthetase. The protein is Fatty acid synthase (FASN) of Capra hircus (Goat).